We begin with the raw amino-acid sequence, 489 residues long: Glutamyl-tRNA(Gln) amidotransferase subunit A (489 aa).

Residues Lys-80 and Ser-160 each act as charge relay system in the active site. Ser-184 acts as the Acyl-ester intermediate in catalysis.

Belongs to the amidase family. GatA subfamily. In terms of assembly, heterotrimer of A, B and C subunits.

The catalysed reaction is L-glutamyl-tRNA(Gln) + L-glutamine + ATP + H2O = L-glutaminyl-tRNA(Gln) + L-glutamate + ADP + phosphate + H(+). Allows the formation of correctly charged Gln-tRNA(Gln) through the transamidation of misacylated Glu-tRNA(Gln) in organisms which lack glutaminyl-tRNA synthetase. The reaction takes place in the presence of glutamine and ATP through an activated gamma-phospho-Glu-tRNA(Gln). The polypeptide is Glutamyl-tRNA(Gln) amidotransferase subunit A (Wolbachia sp. subsp. Brugia malayi (strain TRS)).